The sequence spans 112 residues: Peptidyl-tRNA hydrolase (112 aa).

Positions 64-99 are disordered; the sequence is EEAKRAGLPTGLISDAGRTQLEPGTPTALAIGPAPD.

It belongs to the PTH2 family.

The protein localises to the cytoplasm. It carries out the reaction an N-acyl-L-alpha-aminoacyl-tRNA + H2O = an N-acyl-L-amino acid + a tRNA + H(+). In terms of biological role, the natural substrate for this enzyme may be peptidyl-tRNAs which drop off the ribosome during protein synthesis. The chain is Peptidyl-tRNA hydrolase from Halobacterium salinarum (strain ATCC 29341 / DSM 671 / R1).